The following is a 397-amino-acid chain: Riboflavin biosynthesis protein RibBA (397 aa).

The tract at residues 1 to 199 (MFHRIEEALE…IEDLIAYRRH (199 aa)) is DHBP synthase. D-ribulose 5-phosphate contacts are provided by residues 26 to 27 (RE), Asp-31, 138 to 142 (RAGHT), and Glu-162. Glu-27 lines the Mg(2+) pocket. His-141 provides a ligand contact to Mg(2+). The interval 200-397 (HETLVTREVE…VNKLGHLLNL (198 aa)) is GTP cyclohydrolase II. 250-254 (RVHSE) lines the GTP pocket. Zn(2+) contacts are provided by Cys-255, Cys-266, and Cys-268. GTP contacts are provided by residues Gln-271, 293–295 (EGR), and Thr-315. Asp-327 serves as the catalytic Proton acceptor; for GTP cyclohydrolase activity. Catalysis depends on Arg-329, which acts as the Nucleophile; for GTP cyclohydrolase activity. Thr-350 and Lys-355 together coordinate GTP.

In the N-terminal section; belongs to the DHBP synthase family. It in the C-terminal section; belongs to the GTP cyclohydrolase II family. It depends on Mg(2+) as a cofactor. Mn(2+) serves as cofactor. The cofactor is Zn(2+).

The catalysed reaction is D-ribulose 5-phosphate = (2S)-2-hydroxy-3-oxobutyl phosphate + formate + H(+). It carries out the reaction GTP + 4 H2O = 2,5-diamino-6-hydroxy-4-(5-phosphoribosylamino)-pyrimidine + formate + 2 phosphate + 3 H(+). It participates in cofactor biosynthesis; riboflavin biosynthesis; 2-hydroxy-3-oxobutyl phosphate from D-ribulose 5-phosphate: step 1/1. It functions in the pathway cofactor biosynthesis; riboflavin biosynthesis; 5-amino-6-(D-ribitylamino)uracil from GTP: step 1/4. In terms of biological role, catalyzes the conversion of D-ribulose 5-phosphate to formate and 3,4-dihydroxy-2-butanone 4-phosphate. Functionally, catalyzes the conversion of GTP to 2,5-diamino-6-ribosylamino-4(3H)-pyrimidinone 5'-phosphate (DARP), formate and pyrophosphate. This Bacillus cereus (strain AH187) protein is Riboflavin biosynthesis protein RibBA.